Here is a 210-residue protein sequence, read N- to C-terminus: Large ribosomal subunit protein uL4 (210 aa).

Residues 41–52 (QTNARQGTASTK) are compositionally biased toward polar residues. The tract at residues 41–71 (QTNARQGTASTKTRAEVRGGGRKPWRQKGTG) is disordered. Positions 60-71 (GGRKPWRQKGTG) are enriched in basic residues.

It belongs to the universal ribosomal protein uL4 family. In terms of assembly, part of the 50S ribosomal subunit.

One of the primary rRNA binding proteins, this protein initially binds near the 5'-end of the 23S rRNA. It is important during the early stages of 50S assembly. It makes multiple contacts with different domains of the 23S rRNA in the assembled 50S subunit and ribosome. Functionally, forms part of the polypeptide exit tunnel. The polypeptide is Large ribosomal subunit protein uL4 (Trichormus variabilis (strain ATCC 29413 / PCC 7937) (Anabaena variabilis)).